A 300-amino-acid polypeptide reads, in one-letter code: Delta(7)-sterol 5(6)-desaturase erg31 (300 aa).

3 helical membrane-spanning segments follow: residues 33-53, 78-98, and 117-137; these read ISLF…FASL, VLTA…WFLA, and YFLC…YWAH. One can recognise a Fatty acid hydroxylase domain in the interval 123-248; sequence PLFVMFSDFG…FTTLFDRLGN (126 aa). A Histidine box-1 motif is present at residues 137 to 141; sequence HRFLH. The Histidine box-2 motif lies at 150-154; that stretch reads HKLHH. A helical membrane pass occupies residues 180–200; it reads HLFPFFFPLHKLTYLALFTFV. Positions 225–229 match the Histidine box-3 motif; that stretch reads HNGHH.

It belongs to the sterol desaturase family. Fe cation serves as cofactor.

The protein localises to the endoplasmic reticulum membrane. The catalysed reaction is episterol + 2 Fe(II)-[cytochrome b5] + O2 + 2 H(+) = 5-dehydroepisterol + 2 Fe(III)-[cytochrome b5] + 2 H2O. The protein operates within steroid metabolism; ergosterol biosynthesis. Its function is as follows. C-5 sterol desaturase; part of the third module of ergosterol biosynthesis pathway that includes by the late steps of the pathway. Erg31 and erg32 catalyze the introduction of a C-5 double bond in the B ring to produce 5-dehydroepisterol. The third module or late pathway involves the ergosterol synthesis itself through consecutive reactions that mainly occur in the endoplasmic reticulum (ER) membrane. Firstly, the squalene synthase erg9 catalyzes the condensation of 2 farnesyl pyrophosphate moieties to form squalene, which is the precursor of all steroids. Secondly, squalene is converted into lanosterol by the consecutive action of the squalene epoxidase erg1 and the lanosterol synthase erg7. The lanosterol 14-alpha-demethylase erg11/cyp1 catalyzes C14-demethylation of lanosterol to produce 4,4'-dimethyl cholesta-8,14,24-triene-3-beta-ol. In the next steps, a complex process involving various demethylation, reduction and desaturation reactions catalyzed by the C-14 reductase erg24 and the C-4 demethylation complex erg25-erg26-erg27 leads to the production of zymosterol. Erg28 likely functions in the C-4 demethylation complex reaction by tethering erg26 and Erg27 to the endoplasmic reticulum or to facilitate interaction between these proteins. Then, the sterol 24-C-methyltransferase erg6 catalyzes the methyl transfer from S-adenosyl-methionine to the C-24 of zymosterol to form fecosterol. The C-8 sterol isomerase erg2 catalyzes the reaction which results in unsaturation at C-7 in the B ring of sterols and thus converts fecosterol to episterol. The sterol-C5-desaturases erg31 and erg32 then catalyze the introduction of a C-5 double bond in the B ring to produce 5-dehydroepisterol. The C-22 sterol desaturase erg5 further converts 5-dehydroepisterol into ergosta-5,7,22,24(28)-tetraen-3beta-ol by forming the C-22(23) double bond in the sterol side chain. Finally, ergosta-5,7,22,24(28)-tetraen-3beta-ol is substrate of the C-24(28) sterol reductase erg4 to produce ergosterol. In the genus Schizosaccharomyces, a second route exists between lanosterol and fecosterol, via the methylation of lanosterol to eburicol by erg6, followed by C14-demethylation by erg11/cyp1 and C4-demethylation by the demethylation complex erg25-erg26-erg27. In Schizosaccharomyces pombe (strain 972 / ATCC 24843) (Fission yeast), this protein is Delta(7)-sterol 5(6)-desaturase erg31.